A 74-amino-acid polypeptide reads, in one-letter code: Acyl carrier protein (74 aa).

The 73-residue stretch at 1–73 (MAVFEKVQEI…DLVAYVEEQA (73 aa)) folds into the Carrier domain. At Ser-35 the chain carries O-(pantetheine 4'-phosphoryl)serine.

Belongs to the acyl carrier protein (ACP) family. In terms of processing, 4'-phosphopantetheine is transferred from CoA to a specific serine of apo-ACP by AcpS. This modification is essential for activity because fatty acids are bound in thioester linkage to the sulfhydryl of the prosthetic group.

The protein resides in the cytoplasm. The protein operates within lipid metabolism; fatty acid biosynthesis. Functionally, carrier of the growing fatty acid chain in fatty acid biosynthesis. This chain is Acyl carrier protein, found in Streptococcus pneumoniae serotype 4 (strain ATCC BAA-334 / TIGR4).